Reading from the N-terminus, the 339-residue chain is Tetraacyldisaccharide 4'-kinase (339 aa).

T58–T65 is an ATP binding site.

Belongs to the LpxK family.

The enzyme catalyses a lipid A disaccharide + ATP = a lipid IVA + ADP + H(+). The protein operates within glycolipid biosynthesis; lipid IV(A) biosynthesis; lipid IV(A) from (3R)-3-hydroxytetradecanoyl-[acyl-carrier-protein] and UDP-N-acetyl-alpha-D-glucosamine: step 6/6. Functionally, transfers the gamma-phosphate of ATP to the 4'-position of a tetraacyldisaccharide 1-phosphate intermediate (termed DS-1-P) to form tetraacyldisaccharide 1,4'-bis-phosphate (lipid IVA). The sequence is that of Tetraacyldisaccharide 4'-kinase from Shewanella baltica (strain OS185).